The sequence spans 364 residues: DNA replication and repair protein RecF (364 aa).

Position 23–30 (23–30) interacts with ATP; sequence GPNGIGKS.

This sequence belongs to the RecF family.

The protein resides in the cytoplasm. Functionally, the RecF protein is involved in DNA metabolism; it is required for DNA replication and normal SOS inducibility. RecF binds preferentially to single-stranded, linear DNA. It also seems to bind ATP. This Synechococcus sp. (strain CC9605) protein is DNA replication and repair protein RecF.